The following is a 342-amino-acid chain: Ferredoxin--NADP reductase (342 aa).

Positions 17, 36, 44, 49, 89, 124, 289, and 330 each coordinate FAD.

It belongs to the ferredoxin--NADP reductase type 2 family. In terms of assembly, homodimer. FAD is required as a cofactor.

The enzyme catalyses 2 reduced [2Fe-2S]-[ferredoxin] + NADP(+) + H(+) = 2 oxidized [2Fe-2S]-[ferredoxin] + NADPH. In Rhodopseudomonas palustris (strain BisA53), this protein is Ferredoxin--NADP reductase.